The following is a 903-amino-acid chain: Disintegrin and metalloproteinase domain-containing protein 12 (903 aa).

The signal sequence occupies residues Met1–Gly31. Positions Met32 to Arg205 are excised as a propeptide. N-linked (GlcNAc...) asparagine glycans are attached at residues Asn112, Asn147, and Asn157. Residues Gly175–Asn182 carry the Cysteine switch motif. A Zn(2+)-binding site is contributed by Cys177. Asn182 and Asn185 each carry an N-linked (GlcNAc...) asparagine glycan. Topologically, residues Glu206–Gly706 are extracellular. One can recognise a Peptidase M12B domain in the interval Lys212 to Pro414. 3 disulfide bridges follow: Cys323-Cys409, Cys365-Cys393, and Cys367-Cys376. His348 contacts Zn(2+). Residue Glu349 is part of the active site. Zn(2+) is bound by residues His352 and His358. In terms of domain architecture, Disintegrin spans Gly422–Asp508. Asn450 carries an N-linked (GlcNAc...) asparagine glycan. Cys480 and Cys500 are oxidised to a cystine. Residue Asn649 is glycosylated (N-linked (GlcNAc...) asparagine). The EGF-like domain maps to Gly654–Asp686. Cystine bridges form between Cys658–Cys668, Cys662–Cys674, and Cys676–Cys685. Residues Leu707–Leu727 form a helical membrane-spanning segment. The Cytoplasmic portion of the chain corresponds to Lys728 to Lys903. 2 disordered regions span residues Ser753–Lys790 and His819–Lys903. 2 consecutive short sequence motifs (SH3-binding; class II) follow at residues Ala824 to Arg830 and Lys846 to Lys852. 3 consecutive short sequence motifs (SH3-binding; class I) follow at residues Arg830 to Ala837, Lys852 to Pro858, and Arg881 to Pro887. Positions Pro847–Ala856 are enriched in pro residues. Position 901 is a phosphotyrosine; by SRC (Tyr901).

In terms of assembly, interacts with alpha-actinin-2 and with syndecans. Interacts with SH3PXD2A. Interacts with FST3. Interacts with RACK1; the interaction is required for PKC-dependent translocation of ADAM12 to the cell membrane. The cofactor is Zn(2+). The precursor is cleaved by a furin endopeptidase. Expressed during early developing mesenchymal cells that give rise to skeletal muscle, bones and visceral organs. Not expressed in adult normal muscle but expressed in regenerating muscle.

The protein localises to the membrane. Functionally, involved in skeletal muscle regeneration, specifically at the onset of cell fusion. Also involved in macrophage-derived giant cells (MGC) and osteoclast formation from mononuclear precursors. The chain is Disintegrin and metalloproteinase domain-containing protein 12 (Adam12) from Mus musculus (Mouse).